The chain runs to 228 residues: Uracil-DNA glycosylase (228 aa).

D64 (proton acceptor) is an active-site residue.

The protein belongs to the uracil-DNA glycosylase (UDG) superfamily. UNG family.

It localises to the cytoplasm. It catalyses the reaction Hydrolyzes single-stranded DNA or mismatched double-stranded DNA and polynucleotides, releasing free uracil.. Functionally, excises uracil residues from the DNA which can arise as a result of misincorporation of dUMP residues by DNA polymerase or due to deamination of cytosine. This Yersinia enterocolitica serotype O:8 / biotype 1B (strain NCTC 13174 / 8081) protein is Uracil-DNA glycosylase.